Reading from the N-terminus, the 242-residue chain is Protein FsrB (242 aa).

5 consecutive transmembrane segments (helical) span residues 29–49, 52–72, 78–95, 100–120, and 160–180; these read LTVY…SVLF, LSET…AGGW, WLCR…PFVL, VSLP…LFYW, and KIAS…LPVT.

Belongs to the AgrB family.

The protein resides in the cell membrane. May be involved in the proteolytic processing of a quorum sensing system signal molecule precursor required for the regulation of the virulence genes for gelatinase (gelE) and a serine protease (sprE). This chain is Protein FsrB (fsrB), found in Enterococcus faecalis (strain ATCC 47077 / OG1RF).